We begin with the raw amino-acid sequence, 264 residues long: Thymidylate synthase (264 aa).

DUMP is bound at residue Arg-21. His-51 lines the (6R)-5,10-methylene-5,6,7,8-tetrahydrofolate pocket. 126–127 (RR) contacts dUMP. The active-site Nucleophile is Cys-146. DUMP is bound by residues 166-169 (RSAD), Asn-177, and 207-209 (HIY). Asp-169 is a binding site for (6R)-5,10-methylene-5,6,7,8-tetrahydrofolate. Residue Ala-263 coordinates (6R)-5,10-methylene-5,6,7,8-tetrahydrofolate.

This sequence belongs to the thymidylate synthase family. Bacterial-type ThyA subfamily. As to quaternary structure, homodimer.

The protein localises to the cytoplasm. It catalyses the reaction dUMP + (6R)-5,10-methylene-5,6,7,8-tetrahydrofolate = 7,8-dihydrofolate + dTMP. The protein operates within pyrimidine metabolism; dTTP biosynthesis. In terms of biological role, catalyzes the reductive methylation of 2'-deoxyuridine-5'-monophosphate (dUMP) to 2'-deoxythymidine-5'-monophosphate (dTMP) while utilizing 5,10-methylenetetrahydrofolate (mTHF) as the methyl donor and reductant in the reaction, yielding dihydrofolate (DHF) as a by-product. This enzymatic reaction provides an intracellular de novo source of dTMP, an essential precursor for DNA biosynthesis. The sequence is that of Thymidylate synthase from Bacteroides thetaiotaomicron (strain ATCC 29148 / DSM 2079 / JCM 5827 / CCUG 10774 / NCTC 10582 / VPI-5482 / E50).